The following is a 57-amino-acid chain: Ribulose bisphosphate carboxylase large chain (57 aa).

Positions methionine 1–serine 2 are excised as a propeptide. Residue proline 3 is modified to N-acetylproline. Lysine 14 carries the post-translational modification N6,N6,N6-trimethyllysine.

It belongs to the RuBisCO large chain family. Type I subfamily. In terms of assembly, heterohexadecamer of 8 large chains and 8 small chains.

The protein localises to the plastid. Its subcellular location is the chloroplast. It carries out the reaction 2 (2R)-3-phosphoglycerate + 2 H(+) = D-ribulose 1,5-bisphosphate + CO2 + H2O. It catalyses the reaction D-ribulose 1,5-bisphosphate + O2 = 2-phosphoglycolate + (2R)-3-phosphoglycerate + 2 H(+). In terms of biological role, ruBisCO catalyzes two reactions: the carboxylation of D-ribulose 1,5-bisphosphate, the primary event in carbon dioxide fixation, as well as the oxidative fragmentation of the pentose substrate in the photorespiration process. Both reactions occur simultaneously and in competition at the same active site. In Camellia sinensis (Tea plant), this protein is Ribulose bisphosphate carboxylase large chain (rbcL).